Reading from the N-terminus, the 166-residue chain is AP-3 complex subunit sigma (166 aa).

It belongs to the adaptor complexes small subunit family. In terms of assembly, adaptor protein complex 3 (AP-3) is a heterotetramer composed of two large adaptins (delta-type subunit and beta-type subunit), a medium adaptin (mu-type subunit) and a small adaptin (sigma-type subunit).

Its subcellular location is the cytoplasm. It is found in the golgi apparatus. The protein localises to the cytoplasmic vesicle membrane. Its function is as follows. Part of the AP-3 complex, an adaptor-related complex which seems to be clathrin-associated. The complex is associated with the Golgi region as well as more peripheral structures. It facilitates the budding of vesicles from the Golgi membrane and may be directly involved in trafficking to the vacuole. It also function in maintaining the identity of lytic vacuoles and in regulating the transition between storage and lytic vacuoles. This chain is AP-3 complex subunit sigma, found in Arabidopsis thaliana (Mouse-ear cress).